A 342-amino-acid polypeptide reads, in one-letter code: Hydrogenase expression/formation protein HupV (342 aa).

Belongs to the HupK family.

The protein is Hydrogenase expression/formation protein HupV (hupV) of Azotobacter chroococcum mcd 1.